Here is a 652-residue protein sequence, read N- to C-terminus: Phosphomethylpyrimidine synthase (652 aa).

Residues Asn235, Met264, Tyr293, His329, 349 to 351, 390 to 393, and Glu429 each bind substrate; these read SRG and DGMR. His433 is a Zn(2+) binding site. Position 456 (Tyr456) interacts with substrate. His497 serves as a coordination point for Zn(2+). Positions 577, 580, and 585 each coordinate [4Fe-4S] cluster.

It belongs to the ThiC family. As to quaternary structure, homodimer. It depends on [4Fe-4S] cluster as a cofactor.

The enzyme catalyses 5-amino-1-(5-phospho-beta-D-ribosyl)imidazole + S-adenosyl-L-methionine = 4-amino-2-methyl-5-(phosphooxymethyl)pyrimidine + CO + 5'-deoxyadenosine + formate + L-methionine + 3 H(+). It participates in cofactor biosynthesis; thiamine diphosphate biosynthesis. In terms of biological role, catalyzes the synthesis of the hydroxymethylpyrimidine phosphate (HMP-P) moiety of thiamine from aminoimidazole ribotide (AIR) in a radical S-adenosyl-L-methionine (SAM)-dependent reaction. The polypeptide is Phosphomethylpyrimidine synthase (Shewanella woodyi (strain ATCC 51908 / MS32)).